A 106-amino-acid chain; its full sequence is Replication protein A 14 kDa subunit B (106 aa).

M1 bears the N-acetylmethionine mark.

The protein belongs to the replication factor A protein 3 family. As to quaternary structure, component of the heterotrimeric canonical replication protein A complex (RPA).

It localises to the nucleus. Its function is as follows. As part of the replication protein A (RPA/RP-A), a single-stranded DNA-binding heterotrimeric complex, may play an essential role in DNA replication, recombination and repair. Binds and stabilizes single-stranded DNA intermediates, preventing complementary DNA reannealing and recruiting different proteins involved in DNA metabolism. This Arabidopsis thaliana (Mouse-ear cress) protein is Replication protein A 14 kDa subunit B (RPA3B).